The sequence spans 60 residues: Hemocyte defensin Cg-Defh2 (60 aa).

A signal peptide spans 1–17; that stretch reads LLTLAVLLMVSADMAFA. Beta-D-GlcNAc-(1-&gt;4)-Mur2Ac(oyl-L-Ala-gamma-D-Glu-L-Lys-D-Ala-D-Ala)-di-trans,octa-cis-undecaprenyl diphosphate-binding residues include phenylalanine 19, glycine 20, and cysteine 21. Disulfide bonds link cysteine 21–cysteine 42, cysteine 28–cysteine 51, cysteine 32–cysteine 53, and cysteine 37–cysteine 56. Residues 22-25 are binds to membrane interface; it reads PGDQ. Residue histidine 31 coordinates beta-D-GlcNAc-(1-&gt;4)-Mur2Ac(oyl-L-Ala-gamma-D-Glu-L-Lys-D-Ala-D-Ala)-di-trans,octa-cis-undecaprenyl diphosphate. The tract at residues 43 to 49 is binds to membrane interface; that stretch reads DAVTLWL. Residue cysteine 51 participates in beta-D-GlcNAc-(1-&gt;4)-Mur2Ac(oyl-L-Ala-gamma-D-Glu-L-Lys-D-Ala-D-Ala)-di-trans,octa-cis-undecaprenyl diphosphate binding.

The protein belongs to the invertebrate defensin family. In terms of tissue distribution, expressed in hemocytes.

It is found in the secreted. It localises to the target cell membrane. Functionally, antibacterial peptide mostly active against Gram-positive bacteria. It acts by selectively inhibiting peptidoglycan biosynthesis through complex formation with the cell wall precursor lipid II (1:1 molar ratio) thus inhibiting cell wall synthesis. It does not disrupt cell membranes. Is noticeably more potent than Cg-Defh1. This is Hemocyte defensin Cg-Defh2 from Magallana gigas (Pacific oyster).